A 280-amino-acid chain; its full sequence is Polyamine aminopropyltransferase 2 (280 aa).

The PABS domain occupies 2-237 (ELWLDEALEL…GIIGFTYCSK (236 aa)). Q33 lines the S-methyl-5'-thioadenosine pocket. H64 and D88 together coordinate spermidine. Residues E108 and 139–140 (DG) contribute to the S-methyl-5'-thioadenosine site. The active-site Proton acceptor is D157. 157–160 (DSSD) is a binding site for spermidine. S-methyl-5'-thioadenosine is bound at residue P164.

The protein belongs to the spermidine/spermine synthase family. Homodimer or homotetramer.

The protein localises to the cytoplasm. The catalysed reaction is S-adenosyl 3-(methylsulfanyl)propylamine + putrescine = S-methyl-5'-thioadenosine + spermidine + H(+). It participates in amine and polyamine biosynthesis; spermidine biosynthesis; spermidine from putrescine: step 1/1. Catalyzes the irreversible transfer of a propylamine group from the amino donor S-adenosylmethioninamine (decarboxy-AdoMet) to putrescine (1,4-diaminobutane) to yield spermidine. The chain is Polyamine aminopropyltransferase 2 from Leptospira interrogans serogroup Icterohaemorrhagiae serovar Lai (strain 56601).